A 169-amino-acid chain; its full sequence is Crossover junction endodeoxyribonuclease RuvC (169 aa).

Residues D11, E71, and D143 contribute to the active site. Mg(2+) contacts are provided by D11, E71, and D143.

Belongs to the RuvC family. As to quaternary structure, homodimer which binds Holliday junction (HJ) DNA. The HJ becomes 2-fold symmetrical on binding to RuvC with unstacked arms; it has a different conformation from HJ DNA in complex with RuvA. In the full resolvosome a probable DNA-RuvA(4)-RuvB(12)-RuvC(2) complex forms which resolves the HJ. Mg(2+) is required as a cofactor.

It localises to the cytoplasm. It carries out the reaction Endonucleolytic cleavage at a junction such as a reciprocal single-stranded crossover between two homologous DNA duplexes (Holliday junction).. Functionally, the RuvA-RuvB-RuvC complex processes Holliday junction (HJ) DNA during genetic recombination and DNA repair. Endonuclease that resolves HJ intermediates. Cleaves cruciform DNA by making single-stranded nicks across the HJ at symmetrical positions within the homologous arms, yielding a 5'-phosphate and a 3'-hydroxyl group; requires a central core of homology in the junction. The consensus cleavage sequence is 5'-(A/T)TT(C/G)-3'. Cleavage occurs on the 3'-side of the TT dinucleotide at the point of strand exchange. HJ branch migration catalyzed by RuvA-RuvB allows RuvC to scan DNA until it finds its consensus sequence, where it cleaves and resolves the cruciform DNA. This Bartonella quintana (strain Toulouse) (Rochalimaea quintana) protein is Crossover junction endodeoxyribonuclease RuvC.